Consider the following 623-residue polypeptide: Serine/threonine-protein kinase nrc-2 (623 aa).

Positions 1–215 (MPSTKNANGE…GLGALPPPIR (215 aa)) are disordered. Basic and acidic residues-rich tracts occupy residues 27–36 (SKDHKDRDAH) and 170–180 (LSKEPLEESKD). Residues 199–209 (LAAPDADGLGA) show a composition bias toward low complexity. The region spanning 242–532 (FDKIKLIGKG…ASDIKTHPFF (291 aa)) is the Protein kinase domain. ATP contacts are provided by residues 248–256 (IGKGDVGKV) and Lys-271. The active-site Proton acceptor is Asp-367. The interval 569–596 (VDISGSRQMGLKGEPLESGMVTPGENAV) is disordered.

It belongs to the protein kinase superfamily. Ser/Thr protein kinase family. KIN82 subfamily.

The enzyme catalyses L-seryl-[protein] + ATP = O-phospho-L-seryl-[protein] + ADP + H(+). The catalysed reaction is L-threonyl-[protein] + ATP = O-phospho-L-threonyl-[protein] + ADP + H(+). Controls entry of the cell into the asexual developmental program. Required to repress entry into the conidiation program. The protein is Serine/threonine-protein kinase nrc-2 (nrc-2) of Neurospora crassa (strain ATCC 24698 / 74-OR23-1A / CBS 708.71 / DSM 1257 / FGSC 987).